The sequence spans 263 residues: uncharacterized protein (263 aa).

An ABC transporter domain is found at 12-247 (LETQNLAIGY…ENLAKIYRTS (236 aa)). Residue 44 to 51 (GANGAGKS) participates in ATP binding.

The protein belongs to the ABC transporter superfamily.

This is an uncharacterized protein from Haemophilus influenzae (strain ATCC 51907 / DSM 11121 / KW20 / Rd).